The primary structure comprises 149 residues: Lymphocyte antigen 6 complex locus protein G5c (149 aa).

An N-terminal signal peptide occupies residues 1–41 (MLFMAGPAASWSLRPLGLHGVPQALCAVLLTVLVMKTLVLG). Residues 59-149 (LNCYRCLLET…NPDNRKNSMH (91 aa)) enclose the UPAR/Ly6 domain. Cystine bridges form between Cys-61-Cys-88, Cys-64-Cys-73, Cys-80-Cys-106, Cys-115-Cys-132, and Cys-133-Cys-138. Asn-95 is a glycosylation site (N-linked (GlcNAc...) asparagine).

In terms of assembly, forms oligomers. Post-translationally, N-glycosylated. Detected in adult brain.

The protein localises to the secreted. Its function is as follows. May have a role in hematopoietic cell differentiation. The polypeptide is Lymphocyte antigen 6 complex locus protein G5c (Ly6g5c) (Mus musculus (Mouse)).